The primary structure comprises 407 residues: MSTRPTVSPSELEQIDLASPVLHAEYELDEIFRHLRADEPVYWQQPRNEQPGFWVISRHADVNEVYKDKEHFTTEHGNALATLLTGGDSASGAMLAVTDGVRHHQVRNVLSRGFSARMLDLIAHTLQETVDGLLLAALERGECDAAQDIAADVPLGAICDLLEIPHADRKYLLGLTSHAWSTDYADEPPEESWVAKNEILLYFSKLLKERRGGVREDMVSLLANCRIDGDPLKAAEQMANCYGLMIGGDETGRHAITGTILALIQNPDQWRALKNGDVDLNTATEEALRWTVPSLHGGRKATGDVVINGRRINAGDVVSVWISSANRDETVFDAPDEFNLARTPNKHFTFAYGSHYCLGHYLGRMEVYAVLDGLRRLVGDLEQIGEERWIYSSILHGMSSLPIRITG.

Cysteine 357 is a heme binding site.

This sequence belongs to the cytochrome P450 family. Heme serves as cofactor.

The protein operates within antibiotic biosynthesis; novobiocin biosynthesis. In terms of biological role, together with NovH, involved in the formation of a beta-OH-Tyr intermediate in the novobiocin biosynthesis pathway, an aminocoumarin family antibiotic that targets bacterial DNA gyrases. Acts as a cytochrome P450-type monooxygenase with specificity for the tyrosyl-S-NovH acyl enzyme (L-Tyr-S-NovH) to form the beta-OH-Tyr intermediate (L-beta-OH-Tyr-S-NovH). The polypeptide is Cytochrome P450 NovI (novI) (Streptomyces niveus (Streptomyces spheroides)).